The following is a 391-amino-acid chain: Alkanesulfonate monooxygenase (391 aa).

Belongs to the SsuD family.

It catalyses the reaction an alkanesulfonate + FMNH2 + O2 = an aldehyde + FMN + sulfite + H2O + 2 H(+). Catalyzes the desulfonation of aliphatic sulfonates. The chain is Alkanesulfonate monooxygenase from Paracidovorax citrulli (strain AAC00-1) (Acidovorax citrulli).